We begin with the raw amino-acid sequence, 153 residues long: Protein E6 (153 aa).

Zinc fingers lie at residues 37–73 and 110–146; these read CHFC…CIKC and CSEC…CRAC.

Belongs to the papillomaviridae E6 protein family. In terms of assembly, forms homodimers. Interacts with ubiquitin-protein ligase UBE3A/E6-AP; this interaction stimulates UBE3A ubiquitin activity. Interacts with host BAK1.

The protein localises to the host cytoplasm. Its subcellular location is the host nucleus. Plays a major role in the induction and maintenance of cellular transformation. E6 associates with host UBE3A/E6-AP ubiquitin-protein ligase and modulates its activity. Protects host keratinocytes from apoptosis by mediating the degradation of host BAK1. May also inhibit host immune response. The protein is Protein E6 of Micromys minutus papillomavirus (MmPV).